The primary structure comprises 495 residues: UDP-glycosyltransferase 73C11 (495 aa).

The active-site Proton acceptor is the histidine 24. Position 24 (histidine 24) interacts with an anthocyanidin. The Charge relay role is filled by aspartate 129. Positions 358, 373, 376, 377, 378, and 381 each coordinate UDP-alpha-D-glucose. Glycine 396 provides a ligand contact to an anthocyanidin. Aspartate 397 and glutamine 398 together coordinate UDP-alpha-D-glucose.

The protein belongs to the UDP-glycosyltransferase family.

The catalysed reaction is oleanolate + UDP-alpha-D-glucose = oleanolate 3-O-beta-D-glucoside + UDP + H(+). In terms of biological role, catalyzes the transfer of a glucose (Glc) moiety from UDP-Glc to the C-3 position of the oleanane sapogenins oleanolate and hederagenin, and to the C-28 carboxylic group of the lupane sapogenin betulinate. The monoglucosylated hederagenin 3-O-beta-D-glucoside is a feeding deterrent of the yellow-striped flea beetle (Phyllotreta nemorum). The protein is UDP-glycosyltransferase 73C11 of Barbarea vulgaris (Yellow rocket).